A 276-amino-acid polypeptide reads, in one-letter code: Mitochondrial outer membrane protein porin of 36 kDa (276 aa).

Belongs to the eukaryotic mitochondrial porin (TC 1.B.8.1) family.

It is found in the mitochondrion outer membrane. Forms a channel through the cell membrane that allows diffusion of small hydrophilic molecules. The channel adopts an open conformation at low or zero membrane potential and a closed conformation at potentials above 30-40 mV. The open state has a weak anion selectivity whereas the closed state is cation-selective. This chain is Mitochondrial outer membrane protein porin of 36 kDa, found in Solanum tuberosum (Potato).